Reading from the N-terminus, the 896-residue chain is Translation initiation factor IF-2 (896 aa).

Residues 46–315 (LAHLNRQHGG…FNKPAQPVER (270 aa)) are disordered. Positions 99 to 247 (SASEEQEREE…RKQQEKEDVH (149 aa)) are enriched in basic and acidic residues. Residues 269-278 (SRKRGKKRRR) are compositionally biased toward basic residues. Residues 279-288 (KDEESDDTPR) show a composition bias toward basic and acidic residues. The tr-type G domain occupies 396–565 (PRAPVVTVMG…LLQSEVLDLR (170 aa)). Positions 405-412 (GHVDHGKT) are G1. 405–412 (GHVDHGKT) is a GTP binding site. Residues 430–434 (GITQH) are G2. Positions 451-454 (DTPG) are G3. GTP-binding positions include 451–455 (DTPGH) and 505–508 (NKMD). Residues 505–508 (NKMD) are G4. Residues 541–543 (SAH) form a G5 region.

It belongs to the TRAFAC class translation factor GTPase superfamily. Classic translation factor GTPase family. IF-2 subfamily.

The protein resides in the cytoplasm. Functionally, one of the essential components for the initiation of protein synthesis. Protects formylmethionyl-tRNA from spontaneous hydrolysis and promotes its binding to the 30S ribosomal subunits. Also involved in the hydrolysis of GTP during the formation of the 70S ribosomal complex. In Idiomarina loihiensis (strain ATCC BAA-735 / DSM 15497 / L2-TR), this protein is Translation initiation factor IF-2.